The chain runs to 887 residues: DNA mismatch repair protein MutS (887 aa).

621 to 628 (GPNMGGKS) is an ATP binding site. The disordered stretch occupies residues 828 to 853 (AEPEPNKPAAAAKTKPASPQPDLFAS). Positions 834 to 848 (KPAAAAKTKPASPQP) are enriched in low complexity.

It belongs to the DNA mismatch repair MutS family.

Functionally, this protein is involved in the repair of mismatches in DNA. It is possible that it carries out the mismatch recognition step. This protein has a weak ATPase activity. The protein is DNA mismatch repair protein MutS of Saccharophagus degradans (strain 2-40 / ATCC 43961 / DSM 17024).